Reading from the N-terminus, the 124-residue chain is MAIIADPKTGKTYKKEIPAERMGSLVGRKIGDEIDGVFFDLVGYKLVVTGGSSIDGFPMRSDLQTQGKKQILVSYKKGYRGKNGIRKRITVRGSIIGSDISQINLKIVQYGPTPLEEKKDDQQA.

It belongs to the eukaryotic ribosomal protein eS6 family.

The polypeptide is Small ribosomal subunit protein eS6 (Thermoplasma acidophilum (strain ATCC 25905 / DSM 1728 / JCM 9062 / NBRC 15155 / AMRC-C165)).